The chain runs to 332 residues: 4-hydroxy-3-methylbut-2-enyl diphosphate reductase (332 aa).

A [4Fe-4S] cluster-binding site is contributed by Cys-13. Residues His-41 and His-75 each contribute to the (2E)-4-hydroxy-3-methylbut-2-enyl diphosphate site. Dimethylallyl diphosphate contacts are provided by His-41 and His-75. Isopentenyl diphosphate contacts are provided by His-41 and His-75. Cys-97 provides a ligand contact to [4Fe-4S] cluster. His-125 contacts (2E)-4-hydroxy-3-methylbut-2-enyl diphosphate. His-125 is a dimethylallyl diphosphate binding site. Residue His-125 participates in isopentenyl diphosphate binding. Glu-127 acts as the Proton donor in catalysis. Thr-168 provides a ligand contact to (2E)-4-hydroxy-3-methylbut-2-enyl diphosphate. Cys-229 contacts [4Fe-4S] cluster. The (2E)-4-hydroxy-3-methylbut-2-enyl diphosphate site is built by Ser-257, Ser-258, Asn-259, and Ser-306. Positions 257, 258, 259, and 306 each coordinate dimethylallyl diphosphate. Residues Ser-257, Ser-258, Asn-259, and Ser-306 each contribute to the isopentenyl diphosphate site.

It belongs to the IspH family. Requires [4Fe-4S] cluster as cofactor.

The catalysed reaction is isopentenyl diphosphate + 2 oxidized [2Fe-2S]-[ferredoxin] + H2O = (2E)-4-hydroxy-3-methylbut-2-enyl diphosphate + 2 reduced [2Fe-2S]-[ferredoxin] + 2 H(+). It catalyses the reaction dimethylallyl diphosphate + 2 oxidized [2Fe-2S]-[ferredoxin] + H2O = (2E)-4-hydroxy-3-methylbut-2-enyl diphosphate + 2 reduced [2Fe-2S]-[ferredoxin] + 2 H(+). Its pathway is isoprenoid biosynthesis; dimethylallyl diphosphate biosynthesis; dimethylallyl diphosphate from (2E)-4-hydroxy-3-methylbutenyl diphosphate: step 1/1. It functions in the pathway isoprenoid biosynthesis; isopentenyl diphosphate biosynthesis via DXP pathway; isopentenyl diphosphate from 1-deoxy-D-xylulose 5-phosphate: step 6/6. Its function is as follows. Catalyzes the conversion of 1-hydroxy-2-methyl-2-(E)-butenyl 4-diphosphate (HMBPP) into a mixture of isopentenyl diphosphate (IPP) and dimethylallyl diphosphate (DMAPP). Acts in the terminal step of the DOXP/MEP pathway for isoprenoid precursor biosynthesis. The polypeptide is 4-hydroxy-3-methylbut-2-enyl diphosphate reductase (Chlorobaculum tepidum (strain ATCC 49652 / DSM 12025 / NBRC 103806 / TLS) (Chlorobium tepidum)).